The primary structure comprises 243 residues: HTH-type quorum sensing-dependent transcriptional regulator RpaR (243 aa).

The region spanning lysine 174–glycine 239 is the HTH luxR-type domain. Residues alanine 198–isoleucine 217 constitute a DNA-binding region (H-T-H motif).

It belongs to the autoinducer-regulated transcriptional regulatory protein family.

Its function is as follows. Responds to the quorum-sensing autoinducer 4-coumaroyl-homoserine lactone to regulate expression of several genes. Represses expression of rpaI in the absence of the inducer. This is HTH-type quorum sensing-dependent transcriptional regulator RpaR from Rhodopseudomonas palustris (strain ATCC BAA-98 / CGA009).